The chain runs to 699 residues: Transcription factor MYC2 (699 aa).

Residues 25-60 are disordered; that stretch reads PWGAASTPPPPPPPPHHHHQQQQQQVLPPPAAAPAA. Residues 93–158 form a JAZ-interaction domain region; the sequence is IDVSTGASLL…AAPDEAVEEE (66 aa). Residues 290 to 530 are disordered; the sequence is DISVSKPPPP…EPLNHVEAER (241 aa). Over residues 306–321 the composition is skewed to polar residues; sequence HFENGSTSTLTENPSP. 2 stretches are compositionally biased toward low complexity: residues 335-349 and 387-412; these read PQRQQQQQQSSQAQQ and SSSGRRNPSPAPPAATASLTTAPGSL. Composition is skewed to polar residues over residues 413 to 449 and 459 to 472; these read FSQHTPTLTAAANDAKSNNQKRSMEATSRASNTNNHP and SFSSAPTTRPSTGT. The span at 478–494 shows a compositional bias: basic and acidic residues; it reads SESDHSDLEASVREVES. The Nuclear localization signal motif lies at 506–514; it reads KRPRKRGRK. Residues 507–516 are compositionally biased toward basic residues; sequence RPRKRGRKPA. Residues 517–530 show a composition bias toward basic and acidic residues; the sequence is NGREEPLNHVEAER. The tract at residues 520–533 is basic motif; degenerate; it reads EEPLNHVEAERQRR. The bHLH domain maps to 520-569; it reads EEPLNHVEAERQRREKLNQRFYALRAVVPNVSKMDKASLLGDAISYINEL. The tract at residues 534–569 is helix-loop-helix motif; sequence EKLNQRFYALRAVVPNVSKMDKASLLGDAISYINEL. Residues 582 to 611 form a disordered region; sequence TLQSQMESLKKERDARPPAPSGGGGDGGAR.

This sequence belongs to the bHLH protein family. In terms of assembly, interacts with TIFY3/JAZ1. Highly expressed in spikelets and floral organs.

It is found in the nucleus. In terms of biological role, transcriptional activator involved in jasmonate (JA) signaling pathway during spikelet development. Binds to the G2 region G-box (5'-CACGTG-3') of the MADS1 promoter and thus directly regulates the expression of MADS1. Its function in MADS1 activation is abolished by TIFY3/JAZ1 which directly target MYC2 during spikelet development. This Oryza sativa subsp. japonica (Rice) protein is Transcription factor MYC2.